The chain runs to 529 residues: MLSLVGRVASASASGALRGLNPLAALPQAHLLLRTAPAGVHPARDYAAQSSAAPKAGTATGQIVAVIGAVVDVQFDEGLPPILNALEVQGRESRLVLEVAQHLGESTVRTIAMDGTEGLVRGQKVLDSGAPIKIPVGPETLGRIMNVIGEPIDERGPIKTKQFAPIHAEAPEFIEMSVEQEILVTGIKVVDLLAPYAKGGKIGLFGGAGVGKTVLIMELINNVAKAHGGYSVFAGVGERTREGNDLYHEMIESGVINLKDATSKVALVYGQMNEPPGARARVALTGLTVAEYFRDQEGQDVLLFIDNIFRFTQAGSEVSALLGRIPSAVGYQPTLATDMGTMQERITTTKKGSITSVQAIYVPADDLTDPAPATTFAHLDATTVLSRAIAELGIYPAVDPLDSTSRIMDPNIVGSEHYDVARGVQKILQDYKSLQDIIAILGMDELSEEDKLTVSRARKIQRFLSQPFQVAEVFTGHMGKLVPLKETIKGFQQILAGDYDHLPEQAFYMVGPIEEAVAKADKLAEEHGS.

Residues methionine 1–tyrosine 46 constitute a mitochondrion transit peptide. Residue serine 106 is glycosylated (O-linked (GlcNAc) serine). N6-acetyllysine; alternate occurs at positions 124, 133, and 161. Lysine 124, lysine 133, and lysine 161 each carry N6-succinyllysine; alternate. An N6-acetyllysine modification is found at lysine 198. Glycine 209, valine 210, glycine 211, lysine 212, threonine 213, and valine 214 together coordinate ADP. Residue glycine 209 participates in ATP binding. Positions 209, 210, 211, 212, and 213 each coordinate phosphate. ATP contacts are provided by glycine 211, lysine 212, threonine 213, and valine 214. Threonine 213 contacts Mg(2+). Glutamate 238 is a binding site for Mg(2+). Arginine 239 lines the ATP pocket. An N6-acetyllysine; alternate mark is found at lysine 259 and lysine 264. Residues lysine 259 and lysine 264 each carry the N6-succinyllysine; alternate modification. Phosphothreonine is present on threonine 312. A Phosphoserine modification is found at serine 415. Lysine 426 carries the post-translational modification N6-acetyllysine. Phosphoserine is present on serine 433. Lysine 480 and lysine 485 each carry N6-acetyllysine. Position 522 is an N6-acetyllysine; alternate (lysine 522). Lysine 522 carries the post-translational modification N6-succinyllysine; alternate. Serine 529 carries the phosphoserine modification.

It belongs to the ATPase alpha/beta chains family. Homotrimer. Component of the ATP synthase complex composed at least of ATP5F1A/subunit alpha, ATP5F1B/subunit beta, ATP5MC1/subunit c (homooctomer), MT-ATP6/subunit a, MT-ATP8/subunit 8, ATP5ME/subunit e, ATP5MF/subunit f, ATP5MG/subunit g, ATP5MK/subunit k, ATP5MJ/subunit j, ATP5F1C/subunit gamma, ATP5F1D/subunit delta, ATP5F1E/subunit epsilon, ATP5PF/subunit F6, ATP5PB/subunit b, ATP5PD/subunit d, ATP5PO/subunit OSCP. ATP synthase complex consists of a soluble F(1) head domain (subunits alpha(3) and beta(3)) - the catalytic core - and a membrane F(0) domain - the membrane proton channel (subunits c, a, 8, e, f, g, k and j). These two domains are linked by a central stalk (subunits gamma, delta, and epsilon) rotating inside the F1 region and a stationary peripheral stalk (subunits F6, b, d, and OSCP). Interacts with PPIF. Interacts with BCL2L1 isoform BCL-X(L); the interaction mediates the association of BCL2L1 isoform BCL-X(L) with the mitochondrial membrane F(1)F(0) ATP synthase and enhances neurons metabolic efficiency. Interacts with CLN5 and PPT1. Interacts with S100A1; this interaction increases F1-ATPase activity. Interacts with MTLN. Interacts with TTC5/STRAP; the interaction results in decreased mitochondrial ATP production.

The protein resides in the mitochondrion inner membrane. It carries out the reaction ATP + H2O + 4 H(+)(in) = ADP + phosphate + 5 H(+)(out). Functionally, catalytic subunit beta, of the soluble F(1) head domain within the mitochondrial ATP synthase complex (F(1)F(0) ATP synthase or complex V) that produces ATP from ADP and phosphate inorganique in the presence of a proton gradient across the membrane which is generated by electron transport complexes of the respiratory chain. With the non-catalytic subunit alpha (ATP5F1A), forms the catalytic core in the F(1) domain. ATP synthase complex consist of two structural domains, F(1) - containing the extramembraneous catalytic core, and F(0) - containing the membrane proton channel, linked together by a central stalk and a peripheral stalk. During catalysis, ATP synthesis in the catalytic domain of F(1) is coupled via a rotary mechanism of the central stalk subunits to proton translocation. In terms of biological role, catalytic subunit beta, of the mitochondrial membrane ATP synthase complex (F(1)F(0) ATP synthase or Complex V) that produces ATP from ADP in the presence of a proton gradient across the membrane which is generated by electron transport complexes of the respiratory chain. ATP synthase complex consist of a soluble F(1) head domain - the catalytic core - and a membrane F(1) domain - the membrane proton channel. These two domains are linked by a central stalk rotating inside the F(1) region and a stationary peripheral stalk. During catalysis, ATP synthesis in the catalytic domain of F(1) is coupled via a rotary mechanism of the central stalk subunits to proton translocation. In vivo, can only synthesize ATP although its ATP hydrolase activity can be activated artificially in vitro. With the subunit alpha (ATP5F1A), forms the catalytic core in the F(1) domain. The chain is ATP synthase F(1) complex catalytic subunit beta, mitochondrial from Rattus norvegicus (Rat).